A 525-amino-acid polypeptide reads, in one-letter code: GMP synthase [glutamine-hydrolyzing] (525 aa).

The Glutamine amidotransferase type-1 domain maps to 8-207 (KILILDFGSQ…ALDICGCAAN (200 aa)). Residue C85 is the Nucleophile of the active site. Residues H181 and E183 contribute to the active site. The GMPS ATP-PPase domain maps to 208–400 (WKPSSIIEDA…LGLPYNMLYR (193 aa)). 235 to 241 (SGGVDSS) is a binding site for ATP.

Homodimer.

It carries out the reaction XMP + L-glutamine + ATP + H2O = GMP + L-glutamate + AMP + diphosphate + 2 H(+). It functions in the pathway purine metabolism; GMP biosynthesis; GMP from XMP (L-Gln route): step 1/1. Functionally, catalyzes the synthesis of GMP from XMP. The protein is GMP synthase [glutamine-hydrolyzing] of Shewanella oneidensis (strain ATCC 700550 / JCM 31522 / CIP 106686 / LMG 19005 / NCIMB 14063 / MR-1).